We begin with the raw amino-acid sequence, 370 residues long: UDP-N-acetylglucosamine--N-acetylmuramyl-(pentapeptide) pyrophosphoryl-undecaprenol N-acetylglucosamine transferase (370 aa).

Residues 15-17 (TGG), Asn-129, Arg-170, Ser-199, Ile-254, and Gln-299 contribute to the UDP-N-acetyl-alpha-D-glucosamine site.

This sequence belongs to the glycosyltransferase 28 family. MurG subfamily.

It is found in the cell inner membrane. The catalysed reaction is di-trans,octa-cis-undecaprenyl diphospho-N-acetyl-alpha-D-muramoyl-L-alanyl-D-glutamyl-meso-2,6-diaminopimeloyl-D-alanyl-D-alanine + UDP-N-acetyl-alpha-D-glucosamine = di-trans,octa-cis-undecaprenyl diphospho-[N-acetyl-alpha-D-glucosaminyl-(1-&gt;4)]-N-acetyl-alpha-D-muramoyl-L-alanyl-D-glutamyl-meso-2,6-diaminopimeloyl-D-alanyl-D-alanine + UDP + H(+). The protein operates within cell wall biogenesis; peptidoglycan biosynthesis. Cell wall formation. Catalyzes the transfer of a GlcNAc subunit on undecaprenyl-pyrophosphoryl-MurNAc-pentapeptide (lipid intermediate I) to form undecaprenyl-pyrophosphoryl-MurNAc-(pentapeptide)GlcNAc (lipid intermediate II). The chain is UDP-N-acetylglucosamine--N-acetylmuramyl-(pentapeptide) pyrophosphoryl-undecaprenol N-acetylglucosamine transferase from Magnetococcus marinus (strain ATCC BAA-1437 / JCM 17883 / MC-1).